A 423-amino-acid polypeptide reads, in one-letter code: Kynurenine--oxoglutarate transaminase 1 (423 aa).

Residue glycine 36 participates in substrate binding. At lysine 82 the chain carries N6-succinyllysine. Asparagine 185 contributes to the substrate binding site. Lysine 247 carries the post-translational modification N6-(pyridoxal phosphate)lysine. Residue arginine 398 coordinates substrate.

Belongs to the class-I pyridoxal-phosphate-dependent aminotransferase family. As to quaternary structure, homodimer. Pyridoxal 5'-phosphate is required as a cofactor. Detected in kidney.

Its subcellular location is the cytoplasm. It localises to the cytosol. The protein localises to the mitochondrion matrix. The catalysed reaction is L-kynurenine + 2-oxoglutarate = kynurenate + L-glutamate + H2O. It carries out the reaction 3-phenylpyruvate + L-glutamine = 2-oxoglutaramate + L-phenylalanine. The enzyme catalyses an S-substituted L-cysteine + H2O = a thiol + pyruvate + NH4(+). Its pathway is amino-acid degradation; L-kynurenine degradation; kynurenate from L-kynurenine: step 1/2. With respect to regulation, inhibited by aminooxyacetate (in vitro). Functionally, catalyzes the irreversible transamination of the L-tryptophan metabolite L-kynurenine to form kynurenic acid (KA), an intermediate in the tryptophan catabolic pathway which is also a broad spectrum antagonist of the three ionotropic excitatory amino acid receptors among others. Metabolizes the cysteine conjugates of certain halogenated alkenes and alkanes to form reactive metabolites. Catalyzes the beta-elimination of S-conjugates and Se-conjugates of L-(seleno)cysteine, resulting in the cleavage of the C-S or C-Se bond. The protein is Kynurenine--oxoglutarate transaminase 1 of Rattus norvegicus (Rat).